Reading from the N-terminus, the 1149-residue chain is Beta-alanine-activating enzyme (1149 aa).

Residues 178 to 186, aspartate 408, arginine 422, and lysine 543 contribute to the ATP site; that span reads TSGTTGLPK. The region spanning 570–646 is the Carrier domain; that stretch reads ASVRLKLQNL…DLLSHIMTET (77 aa). Serine 605 bears the O-(pantetheine 4'-phosphoryl)serine mark. The segment at 653-683 is disordered; sequence PSKKRTADYSDSEASGKRQHKEMTTSSDTES.

The protein belongs to the ATP-dependent AMP-binding enzyme family.

Covalently binds beta-alanine in an ATP-dependent manner to form a thioester bond with its phosphopantetheine group and transfers it to an, as yet, unknown acceptor. May be required for a post-translational protein modification or for post-transcriptional modification of an RNA. The sequence is that of Beta-alanine-activating enzyme (aasdh) from Danio rerio (Zebrafish).